A 137-amino-acid polypeptide reads, in one-letter code: Crustacean hyperglycemic hormones (137 aa).

An N-terminal signal peptide occupies residues Met-1–Gly-28. Gln-64 is subject to Pyrrolidone carboxylic acid. D-phenylalanine; in form CHH-II is present on Phe-66. 3 cysteine pairs are disulfide-bonded: Cys-70–Cys-106, Cys-86–Cys-102, and Cys-89–Cys-115. Val-135 carries the valine amide modification.

Belongs to the arthropod CHH/MIH/GIH/VIH hormone family. In terms of tissue distribution, produced by the medulla terminalis X-organ in the eyestalks and transported to the sinus gland where they are stored and released.

The protein resides in the secreted. In terms of biological role, hormone found in the sinus gland of isopods and decapods which controls the blood sugar level. Has a secretagogue action over the amylase released from the midgut gland. May act as a stress hormone and may be involved in the control of molting and reproduction. The polypeptide is Crustacean hyperglycemic hormones (Procambarus clarkii (Red swamp crayfish)).